Consider the following 311-residue polypeptide: 4-hydroxy-tetrahydrodipicolinate synthase (311 aa).

T49 is a binding site for pyruvate. Y138 functions as the Proton donor/acceptor in the catalytic mechanism. The Schiff-base intermediate with substrate role is filled by K166. I207 is a binding site for pyruvate.

It belongs to the DapA family. Homotetramer; dimer of dimers.

It localises to the cytoplasm. The catalysed reaction is L-aspartate 4-semialdehyde + pyruvate = (2S,4S)-4-hydroxy-2,3,4,5-tetrahydrodipicolinate + H2O + H(+). Its pathway is amino-acid biosynthesis; L-lysine biosynthesis via DAP pathway; (S)-tetrahydrodipicolinate from L-aspartate: step 3/4. In terms of biological role, catalyzes the condensation of (S)-aspartate-beta-semialdehyde [(S)-ASA] and pyruvate to 4-hydroxy-tetrahydrodipicolinate (HTPA). In Lactobacillus acidophilus (strain ATCC 700396 / NCK56 / N2 / NCFM), this protein is 4-hydroxy-tetrahydrodipicolinate synthase.